The sequence spans 202 residues: Small ribosomal subunit protein uS4 (202 aa).

The region spanning 91 to 168 is the S4 RNA-binding domain; that stretch reads SRLSSVLYNS…QKVPDYLEVD (78 aa).

This sequence belongs to the universal ribosomal protein uS4 family. As to quaternary structure, part of the 30S ribosomal subunit. Contacts protein S5. The interaction surface between S4 and S5 is involved in control of translational fidelity.

Its function is as follows. One of the primary rRNA binding proteins, it binds directly to 16S rRNA where it nucleates assembly of the body of the 30S subunit. Functionally, with S5 and S12 plays an important role in translational accuracy. In Ehrlichia chaffeensis (strain ATCC CRL-10679 / Arkansas), this protein is Small ribosomal subunit protein uS4.